Reading from the N-terminus, the 192-residue chain is Phosphoheptose isomerase (192 aa).

In terms of domain architecture, SIS spans 37–192 (LADSFKAGGK…IQLIEKEMAK (156 aa)). 52-54 (NGG) serves as a coordination point for substrate. Residues His61 and Glu65 each contribute to the Zn(2+) site. Substrate-binding positions include Glu65, 93-94 (ND), 119-121 (STS), Ser124, and Gln172. Residues Gln172 and His180 each coordinate Zn(2+).

The protein belongs to the SIS family. GmhA subfamily. As to quaternary structure, homotetramer. Zn(2+) serves as cofactor.

The protein localises to the cytoplasm. The enzyme catalyses 2 D-sedoheptulose 7-phosphate = D-glycero-alpha-D-manno-heptose 7-phosphate + D-glycero-beta-D-manno-heptose 7-phosphate. It participates in carbohydrate biosynthesis; D-glycero-D-manno-heptose 7-phosphate biosynthesis; D-glycero-alpha-D-manno-heptose 7-phosphate and D-glycero-beta-D-manno-heptose 7-phosphate from sedoheptulose 7-phosphate: step 1/1. In terms of biological role, catalyzes the isomerization of sedoheptulose 7-phosphate in D-glycero-D-manno-heptose 7-phosphate. The sequence is that of Phosphoheptose isomerase from Escherichia fergusonii (strain ATCC 35469 / DSM 13698 / CCUG 18766 / IAM 14443 / JCM 21226 / LMG 7866 / NBRC 102419 / NCTC 12128 / CDC 0568-73).